A 554-amino-acid chain; its full sequence is Oxygen-dependent choline dehydrogenase (554 aa).

4–33 (DYIIIGAGSAGNVLATRLTEDPNTTVLLLE) contacts FAD. Histidine 473 serves as the catalytic Proton acceptor.

The protein belongs to the GMC oxidoreductase family. FAD is required as a cofactor.

It carries out the reaction choline + A = betaine aldehyde + AH2. The catalysed reaction is betaine aldehyde + NAD(+) + H2O = glycine betaine + NADH + 2 H(+). The protein operates within amine and polyamine biosynthesis; betaine biosynthesis via choline pathway; betaine aldehyde from choline (cytochrome c reductase route): step 1/1. Functionally, involved in the biosynthesis of the osmoprotectant glycine betaine. Catalyzes the oxidation of choline to betaine aldehyde and betaine aldehyde to glycine betaine at the same rate. This Klebsiella pneumoniae subsp. pneumoniae (strain ATCC 700721 / MGH 78578) protein is Oxygen-dependent choline dehydrogenase.